A 27-amino-acid polypeptide reads, in one-letter code: Allergen C-C (27 aa).

The protein belongs to the protease inhibitor I6 (cereal trypsin/alpha-amylase inhibitor) family.

Its subcellular location is the secreted. This Triticum aestivum (Wheat) protein is Allergen C-C.